Consider the following 907-residue polypeptide: Chloride channel protein 2 (907 aa).

Residues 1–93 (MAAATAAAAT…RCHKFLVSRV (93 aa)) lie on the Cytoplasmic side of the membrane. Residues 22 to 40 (QYEQTLMYGRYTQELGAFA) are essential for channel gating by both voltage and cell volume. Thr26 is subject to Phosphothreonine. The tract at residues 42-55 (EEAARIRLGGPEPW) is modulates channel gating by both voltage and cell volume. 2 helical membrane-spanning segments follow: residues 94–127 (GEDWIFLVLLGLLMALVSWAMDYAIAVCLQAQQW) and 136–161 (ILLQYLAWVTYPVVLITFSAGFTQIL). The Selectivity filter part_1 motif lies at 167-171 (GSGIP). Residues 170-177 (IPEMKTIL) constitute an intramembrane region (helical). The next 2 helical transmembrane spans lie at 186-204 (LTLKTFVAKVIGLTCALGS) and 211-229 (EGPFVHIASMCAALLSKFL). The short motif at 209–213 (GKEGP) is the Selectivity filter part_2 element. Intramembrane regions (helical) lie at residues 245–257 (MLAAACAVGVGCC) and 261–269 (PIGGVLFSI). Helical transmembrane passes span 281 to 301 (YWRGFFAATFSAFIFRVLAVW), 327 to 355 (LPAFAVIGIASGFGGALFVYLNRKIVQVM), 364 to 383 (FLMKKRLLFPALVTLLISTL), 435 to 455 (ANVFLTLVIFILMKFWMSALA), and 463 to 486 (GAFMPVFVIGAAFGRLVGESMAAW). The Selectivity filter part_3 signature appears at 463 to 467 (GAFMP). The segment at residues 503 to 517 (GGYAVVGAAALAGAV) is an intramembrane region (helical). An intramembrane region (note=Loop between two helices) is located at residues 518-519 (TH). Positions 520 to 531 (TVSTAVIVFELT) form an intramembrane region, helical. The note=Loop between two helices intramembrane region spans 532-536 (GQIAH). A helical transmembrane segment spans residues 537–554 (ILPVMIAVILANAVAQSL). At 555-907 (QPSLYDSIIR…TPSDSDDKCQ (353 aa)) the chain is on the cytoplasmic side. The 59-residue stretch at 590–648 (MVRDVPHVALSCTFRDLRLALHRTKGRMLALVESPESMILLGSIERSQVVALLGAQLSP) folds into the CBS 1 domain. Over residues 650–660 (RRRQHMQKLRK) the composition is skewed to basic residues. A disordered region spans residues 650–720 (RRRQHMQKLR…NATSLQEGTT (71 aa)). Low complexity predominate over residues 664–678 (SPPSDQESPPSSETS). Basic residues predominate over residues 696-705 (QTHKPLKPAL). Polar residues predominate over residues 710–720 (SNATSLQEGTT). Ser767 is subject to Phosphoserine. Residues 799 to 859 (IDPAPFQLVE…GSVTAQGVKV (61 aa)) enclose the CBS 2 domain. A Basolateral membrane sorting motif is present at residues 821–822 (LL). The disordered stretch occupies residues 865–907 (SFRDSATSSSDTETTEVHALWGPRSRHGLPREGTPSDSDDKCQ).

This sequence belongs to the chloride channel (TC 2.A.49) family. ClC-2/CLCN2 subfamily. As to quaternary structure, homodimer. Interacts with auxiliary subunit HEPACAM. Post-translationally, phosphorylated. Activated by dephosphorylation. Ubiquitously expressed. Expressed in neurons and glial cells (at protein level).

Its subcellular location is the cell membrane. The protein resides in the basolateral cell membrane. It localises to the cell projection. It is found in the dendritic spine membrane. The protein localises to the axon. The enzyme catalyses chloride(in) = chloride(out). It catalyses the reaction thiocyanate(in) = thiocyanate(out). The catalysed reaction is bromide(in) = bromide(out). It carries out the reaction nitrate(in) = nitrate(out). The enzyme catalyses iodide(out) = iodide(in). Its activity is regulated as follows. Common gate kinetics are down-regulated by intracellular ATP. Inhibited by AK-42, a derivative of meclofenamate. Inhibited by Cd(2+). Inhibited by Zn(2+) and PKC activation. Inhibited at acidic pH. CCLN2:HEPACAM channel conductance is up-regulated upon hypo-osmolarity. Its function is as follows. Voltage-gated and osmosensitive chloride channel. Forms a homodimeric channel where each subunit has its own ion conduction pathway. Conducts double-barreled currents controlled by two types of gates, two fast glutamate gates that control each subunit independently and a slow common gate that opens and shuts off both subunits simultaneously. Displays inward rectification currents activated upon membrane hyperpolarization and extracellular hypotonicity. Contributes to chloride conductance involved in neuron excitability. In hippocampal neurons, generates a significant part of resting membrane conductance and provides an additional chloride efflux pathway to prevent chloride accumulation in dendrites upon GABA receptor activation. In glia, associates with the auxiliary subunit HEPACAM/GlialCAM at astrocytic processes and myelinated fiber tracts where it may regulate transcellular chloride flux buffering extracellular chloride and potassium concentrations. Regulates aldosterone production in adrenal glands. The opening of CLCN2 channels at hyperpolarized membrane potentials in the glomerulosa causes cell membrane depolarization, activation of voltage-gated calcium channels and increased expression of aldosterone synthase, the rate-limiting enzyme for aldosterone biosynthesis. Contributes to chloride conductance in retinal pigment epithelium involved in phagocytosis of shed photoreceptor outer segments and photoreceptor renewal. Conducts chloride currents at the basolateral membrane of epithelial cells with a role in chloride reabsorption rather than secretion. Permeable to small monovalent anions with chloride &gt; thiocyanate &gt; bromide &gt; nitrate &gt; iodide ion selectivity. This is Chloride channel protein 2 (Clcn2) from Rattus norvegicus (Rat).